The following is a 616-amino-acid chain: UvrABC system protein C (616 aa).

Residues 21–99 (HQPGVYRMYD…IKLYLPKYNV (79 aa)) enclose the GIY-YIG domain. The UVR domain occupies 209 to 244 (RQVIASLVEKMEQASQSLNFEQAATFRDQIQALRRV).

It belongs to the UvrC family. In terms of assembly, interacts with UvrB in an incision complex.

It is found in the cytoplasm. The UvrABC repair system catalyzes the recognition and processing of DNA lesions. UvrC both incises the 5' and 3' sides of the lesion. The N-terminal half is responsible for the 3' incision and the C-terminal half is responsible for the 5' incision. This Photobacterium profundum (strain SS9) protein is UvrABC system protein C.